The following is a 151-amino-acid chain: S-protein homolog 1 (151 aa).

The first 18 residues, 1–18, serve as a signal peptide directing secretion; the sequence is MNCIKQFLLAICFSLALT.

It belongs to the plant self-incompatibility (S1) protein family. In terms of tissue distribution, restricted to floral tissues.

Its subcellular location is the secreted. This is S-protein homolog 1 from Arabidopsis thaliana (Mouse-ear cress).